The following is a 175-amino-acid chain: Ribosome-binding factor A (175 aa).

Positions 131–175 (KPAGEADPYRDRGSVDEPSDAGGLVIRTSDGLEAENTGDDYQAED) are disordered. Residues 162 to 175 (LEAENTGDDYQAED) are compositionally biased toward acidic residues.

Belongs to the RbfA family. As to quaternary structure, monomer. Binds 30S ribosomal subunits, but not 50S ribosomal subunits or 70S ribosomes.

Its subcellular location is the cytoplasm. Functionally, one of several proteins that assist in the late maturation steps of the functional core of the 30S ribosomal subunit. Associates with free 30S ribosomal subunits (but not with 30S subunits that are part of 70S ribosomes or polysomes). Required for efficient processing of 16S rRNA. May interact with the 5'-terminal helix region of 16S rRNA. The protein is Ribosome-binding factor A of Mycobacterium ulcerans (strain Agy99).